Reading from the N-terminus, the 704-residue chain is Protein cueball (704 aa).

A signal peptide spans 1–26 (MKSPCRAAAGWLVLLLSSCCLGYVIA). At 27–594 (TEWAAAVTTD…TYCKESFNRT (568 aa)) the chain is on the extracellular side. LDL-receptor class B repeat units follow at residues 69 to 119 (GKLY…DHLE), 120 to 166 (RRLY…EATT), 199 to 242 (RHLY…DHYR), and 243 to 288 (NRLY…KNDY). N-linked (GlcNAc...) asparagine glycosylation is found at asparagine 152 and asparagine 219. 3 consecutive EGF-like domains span residues 363 to 397 (TQQQ…KLCE), 432 to 478 (DRNR…ARCE), and 514 to 551 (EEYS…QRCE). Intrachain disulfides connect cysteine 372-cysteine 385, cysteine 387-cysteine 396, cysteine 436-cysteine 446, cysteine 440-cysteine 465, cysteine 467-cysteine 477, cysteine 518-cysteine 528, cysteine 522-cysteine 539, and cysteine 541-cysteine 550. Asparagine 375 carries an N-linked (GlcNAc...) asparagine glycan. The N-linked (GlcNAc...) asparagine glycan is linked to asparagine 450. The N-linked (GlcNAc...) asparagine glycan is linked to asparagine 532. Asparagine 592 is a glycosylation site (N-linked (GlcNAc...) asparagine). A helical transmembrane segment spans residues 595–615 (VVYTSLCFTVSFALLLAVVLV). The Cytoplasmic portion of the chain corresponds to 616 to 704 (VSRMMKPPRP…NCGDGTAERK (89 aa)).

Belongs to the cueball family.

The protein localises to the cell membrane. In terms of biological role, has a role in spermatogenesis and oogenesis. This is Protein cueball from Anopheles gambiae (African malaria mosquito).